The primary structure comprises 125 residues: MARISGIDLPSNKQLKIALTSIYGIGRTRALEVCNKSSISPSKIAKDLDNDEVNRLRKVIESDYVVEGKLRSEVAMSIKRLMDIACYRGVRHRKGLPLRGQRTKTNARTRKGKRKTVANKKIASK.

The segment at 95-125 (GLPLRGQRTKTNARTRKGKRKTVANKKIASK) is disordered.

The protein belongs to the universal ribosomal protein uS13 family. As to quaternary structure, part of the 30S ribosomal subunit. Forms a loose heterodimer with protein S19. Forms two bridges to the 50S subunit in the 70S ribosome.

Located at the top of the head of the 30S subunit, it contacts several helices of the 16S rRNA. In the 70S ribosome it contacts the 23S rRNA (bridge B1a) and protein L5 of the 50S subunit (bridge B1b), connecting the 2 subunits; these bridges are implicated in subunit movement. Contacts the tRNAs in the A and P-sites. In Borrelia garinii subsp. bavariensis (strain ATCC BAA-2496 / DSM 23469 / PBi) (Borreliella bavariensis), this protein is Small ribosomal subunit protein uS13.